Reading from the N-terminus, the 186-residue chain is Large ribosomal subunit protein uL22 (186 aa).

A disordered region spans residues 161–186; sequence VDDEPAKKKLSKKKLQRQKEKMLRSE. The segment covering 177 to 186 has biased composition (basic and acidic residues); sequence RQKEKMLRSE.

This sequence belongs to the universal ribosomal protein uL22 family.

This is Large ribosomal subunit protein uL22 (RpL17) from Drosophila pseudoobscura pseudoobscura (Fruit fly).